The chain runs to 335 residues: Proline racemase (335 aa).

Catalysis depends on cysteine 91, which acts as the Proton acceptor. Cysteine 255 acts as the Proton donor in catalysis.

This sequence belongs to the proline racemase family. Homodimer.

It catalyses the reaction L-proline = D-proline. Catalyzes the reversible interconversion of L- and D-proline. Plays an important role in the regulation of intra- and extracellular amino acid pools, allowing the bacterium to profit from host precursors and enzymatic pathways. Strong B-cell mitogen. The polypeptide is Proline racemase (Clostridioides difficile (strain 630) (Peptoclostridium difficile)).